The sequence spans 365 residues: MSPSDRIPPGVWNAIDYERLAPQAMDAGRHAYVAGGCGWDATVAANRAAFAGWAVLPRLLRDVRAGHTRLQLAGMDLPHPLLLAPVAHQRLAHPDAEIATARAAQATGSCLVASTLSSCTLEDIAAASGPARWFQLYLQPEREHSLDLLRRAEAAGYRAIVLTLDASIQLASRGALQAGFAMPADCVSANLARYPQPAPAQPAAGESRIFQGAMRHAPRWDDLRWLLASTRLPVWIKGVLHPEDARELQAAGAAGLIVSNHGGRSLDGAPASLRMLPALRTAVGAGYPLLLDGGVRSGQDAFKALALGADAVLVGRLQVYALAVAGALGVAHMLQMLVEELHACMAQAGCARLSDITHDTLTPSC.

Residues 6–365 (RIPPGVWNAI…ITHDTLTPSC (360 aa)) enclose the FMN hydroxy acid dehydrogenase domain. Pyruvate is bound at residue Tyr32. FMN contacts are provided by residues 85–87 (PVA), Ser114, and Gln135. Tyr137 contacts pyruvate. Thr163, Lys237, and Ser259 together coordinate FMN. The pyruvate site is built by His261 and Arg264. His261 acts as the Proton acceptor in catalysis. FMN contacts are provided by residues 292–296 (DGGVR) and Arg316.

This sequence belongs to the FMN-dependent alpha-hydroxy acid dehydrogenase family. Homotetramer. Requires FMN as cofactor.

It carries out the reaction (S)-lactate + O2 = pyruvate + H2O2. The catalysed reaction is glycolate + O2 = glyoxylate + H2O2. Functionally, catalyzes the oxidation of (S)-lactate (L-lactate) to pyruvate, with a reduction of O2 to H2O2. To a lesser extent is also able to use glycolate as substrate. In Alicycliphilus denitrificans (strain DSM 14773 / CIP 107495 / K601), this protein is L-lactate oxidase.